The following is a 208-amino-acid chain: Effector protein MavE (208 aa).

Residues 77–80 (NPRY) carry the NPxY eukaryotic motif motif. Residues 184 to 204 (VLFPFVAATVAVAATAASVLF) form a helical membrane-spanning segment.

As to quaternary structure, homotrimer.

It is found in the secreted. Its subcellular location is the host vacuole. It localises to the host pathogen-containing vacuole. The protein resides in the host pathogen-containing vacuole membrane. Its function is as follows. Virulence effector that is indispensable for endoplasmic reticulum (ER)-mediated remodeling of the Legionella pneumophila-containing vacuole (LCV) and lysosomal evasion. Essential for intracellular replication in human monocyte-derived macrophages (hMDMs) and amoebae, as well as for intrapulmonary proliferation in mice. The protein is Effector protein MavE of Legionella pneumophila subsp. pneumophila (strain Philadelphia 1 / ATCC 33152 / DSM 7513).